Consider the following 218-residue polypeptide: Elongation factor Ts (218 aa).

The involved in Mg(2+) ion dislocation from EF-Tu stretch occupies residues 82–85 (TDFV).

It belongs to the EF-Ts family.

The protein resides in the cytoplasm. Associates with the EF-Tu.GDP complex and induces the exchange of GDP to GTP. It remains bound to the aminoacyl-tRNA.EF-Tu.GTP complex up to the GTP hydrolysis stage on the ribosome. The sequence is that of Elongation factor Ts from Prochlorococcus marinus (strain MIT 9211).